A 455-amino-acid polypeptide reads, in one-letter code: MSATAISDLFEKPAQFKNKKIKLTGWLKNKRTSANIIFLEVNDGSTLLNLQAVVKQDQPELFALAESISLASAVSVSGTVALTPKSKQPLELVVKQINVLSTARADYPLQKKEHSLEFFRNNAYLRVRARTYFAIMKVRSLLSQAIFDYFFKNDFVLVHSPILTSNDCEGAGETFELKQGKEFFNKTTYLTVSGQFGAECYAQAFKKVFTFGPTFRAEKSHTSRHLSEFWMIEPEVAFANLKDLIKLIESTVKTVIKQVMQKAKQELDFLEKQFDVKLMERLKQITSTKNFHVLEYTKALEILKTAQASGQANFEVQDFNFGLDLKTEHERFLCEQHFHNQPVFVINYPKDFKAFYMKQNADGRTVGAVDLLFPQIGEICGGSEREGNLEKLVERCQAMQIDTQTLNWYLDMRKWGYFASAGFGLGFDRLLAYICGLENIRDAIPFPRAHGSINY.

This sequence belongs to the class-II aminoacyl-tRNA synthetase family. As to quaternary structure, homodimer.

The protein resides in the cytoplasm. It catalyses the reaction tRNA(Asn) + L-asparagine + ATP = L-asparaginyl-tRNA(Asn) + AMP + diphosphate + H(+). This Mycoplasma pneumoniae (strain ATCC 29342 / M129 / Subtype 1) (Mycoplasmoides pneumoniae) protein is Asparagine--tRNA ligase.